The chain runs to 414 residues: ORC1-type DNA replication protein 11 (414 aa).

ATP is bound by residues V60–A64, Y207, and R219.

It belongs to the CDC6/cdc18 family.

Functionally, involved in regulation of DNA replication. This Haloarcula marismortui (strain ATCC 43049 / DSM 3752 / JCM 8966 / VKM B-1809) (Halobacterium marismortui) protein is ORC1-type DNA replication protein 11 (cdc6k).